The chain runs to 330 residues: 4-hydroxythreonine-4-phosphate dehydrogenase (330 aa).

Residues His-136 and Thr-137 each coordinate substrate. Residues His-166, His-211, and His-266 each coordinate a divalent metal cation. Substrate is bound by residues Lys-274, Asn-283, and Arg-292.

It belongs to the PdxA family. As to quaternary structure, homodimer. It depends on Zn(2+) as a cofactor. Mg(2+) is required as a cofactor. The cofactor is Co(2+).

Its subcellular location is the cytoplasm. The enzyme catalyses 4-(phosphooxy)-L-threonine + NAD(+) = 3-amino-2-oxopropyl phosphate + CO2 + NADH. The protein operates within cofactor biosynthesis; pyridoxine 5'-phosphate biosynthesis; pyridoxine 5'-phosphate from D-erythrose 4-phosphate: step 4/5. In terms of biological role, catalyzes the NAD(P)-dependent oxidation of 4-(phosphooxy)-L-threonine (HTP) into 2-amino-3-oxo-4-(phosphooxy)butyric acid which spontaneously decarboxylates to form 3-amino-2-oxopropyl phosphate (AHAP). This Sodalis glossinidius (strain morsitans) protein is 4-hydroxythreonine-4-phosphate dehydrogenase.